We begin with the raw amino-acid sequence, 40 residues long: uncharacterized protein (40 aa).

Residues 20–37 (TYLYWTAVTAAYLTYLTI) traverse the membrane as a helical segment.

Its subcellular location is the membrane. This is an uncharacterized protein from Archaeoglobus fulgidus (strain ATCC 49558 / DSM 4304 / JCM 9628 / NBRC 100126 / VC-16).